A 64-amino-acid chain; its full sequence is Alpha-conotoxin CnIC (64 aa).

The first 21 residues, 1 to 21 (MGMRMMFTVFLLVVLTTTVVS), serve as a signal peptide directing secretion. A propeptide spanning residues 22–47 (FPSDSASDVRDDEAKDERSDMYKSKR) is cleaved from the precursor. Asn48 bears the Deamidated asparagine; in CnIH; partial mark. 2 disulfides stabilise this stretch: Cys51–Cys56 and Cys52–Cys62. The residue at position 62 (Cys62) is a Cysteine amide.

The protein belongs to the conotoxin A superfamily. In terms of tissue distribution, expressed by the venom duct.

It localises to the secreted. Its function is as follows. Alpha-conotoxins act on postsynaptic membranes, they bind to the nicotinic acetylcholine receptors (nAChR) and thus inhibit them. This Conus consors (Singed cone) protein is Alpha-conotoxin CnIC.